Here is a 236-residue protein sequence, read N- to C-terminus: 7-cyano-7-deazaguanine synthase (236 aa).

Residue 7 to 17 participates in ATP binding; the sequence is CSGGLDSVSLA. Positions 185, 193, 196, and 199 each coordinate Zn(2+).

It belongs to the QueC family. It depends on Zn(2+) as a cofactor.

The catalysed reaction is 7-carboxy-7-deazaguanine + NH4(+) + ATP = 7-cyano-7-deazaguanine + ADP + phosphate + H2O + H(+). Its pathway is purine metabolism; 7-cyano-7-deazaguanine biosynthesis. In terms of biological role, catalyzes the ATP-dependent conversion of 7-carboxy-7-deazaguanine (CDG) to 7-cyano-7-deazaguanine (preQ(0)). The protein is 7-cyano-7-deazaguanine synthase of Rhizobium leguminosarum bv. trifolii (strain WSM2304).